The sequence spans 377 residues: tRNA-specific 2-thiouridylase MnmA (377 aa).

Residues 8–15 (GMSGGVDS) and M34 each bind ATP. The interval 94–96 (NPD) is interaction with target base in tRNA. The active-site Nucleophile is the C99. C99 and C201 form a disulfide bridge. G123 lines the ATP pocket. Positions 151–153 (KDQ) are interaction with tRNA. The Cysteine persulfide intermediate role is filled by C201. Residues 315–316 (RY) are interaction with tRNA.

This sequence belongs to the MnmA/TRMU family.

Its subcellular location is the cytoplasm. It carries out the reaction S-sulfanyl-L-cysteinyl-[protein] + uridine(34) in tRNA + AH2 + ATP = 2-thiouridine(34) in tRNA + L-cysteinyl-[protein] + A + AMP + diphosphate + H(+). Its function is as follows. Catalyzes the 2-thiolation of uridine at the wobble position (U34) of tRNA, leading to the formation of s(2)U34. The protein is tRNA-specific 2-thiouridylase MnmA of Acinetobacter baumannii (strain SDF).